The sequence spans 547 residues: Solute carrier family 22 member 7 (547 aa).

The next 12 helical transmembrane spans lie at 21 to 41 (VALL…PIFL), 145 to 165 (ATST…GYLS), 173 to 193 (LLLV…ASVS), 203 to 223 (LTGT…LEWL), 233 to 253 (VLSS…GYLI), 258 to 278 (WLLL…WWVP), 345 to 365 (ISLC…GLSL), 374 to 396 (VYQT…YLSV), 403 to 423 (LTLA…LLVS), 431 to 451 (TALA…AYLF), 465 to 485 (MGLT…AALL), and 492 to 512 (LPKL…LLLP). Positions 521 to 547 (ETIQDVERKSAPSSLQEEEMPMKQVQD) are disordered.

This sequence belongs to the major facilitator (TC 2.A.1) superfamily. Organic cation transporter (TC 2.A.1.19) family.

It is found in the basolateral cell membrane. The protein resides in the apical cell membrane. The protein localises to the cell membrane. It carries out the reaction orotate(out) + L-glutamate(in) = orotate(in) + L-glutamate(out). The enzyme catalyses 3',5'-cyclic GMP(in) = 3',5'-cyclic GMP(out). It catalyses the reaction GMP(in) = GMP(out). The catalysed reaction is 2'-deoxyguanosine(in) = 2'-deoxyguanosine(out). It carries out the reaction GDP(in) = GDP(out). The enzyme catalyses guanosine(in) = guanosine(out). It catalyses the reaction GTP(in) = GTP(out). The catalysed reaction is 3',5'-cyclic AMP(in) = 3',5'-cyclic AMP(out). It carries out the reaction creatinine(in) = creatinine(out). The enzyme catalyses prostaglandin E2(out) = prostaglandin E2(in). It catalyses the reaction 2-oxoglutarate(in) = 2-oxoglutarate(out). The catalysed reaction is glutarate(in) = glutarate(out). It carries out the reaction urate(out) = urate(in). The enzyme catalyses estrone 3-sulfate(out) = estrone 3-sulfate(in). Functionally, functions as a Na(+)-independent bidirectional multispecific transporter. Contributes to the renal and hepatic elimination of endogenous organic compounds from the systemic circulation into the urine and bile, respectively. Capable of transporting a wide range of purine and pyrimidine nucleobases, nucleosides and nucleotides, with cGMP, 2'deoxyguanosine and GMP being the preferred substrates. Functions as a pH- and chloride-independent cGMP bidirectional facilitative transporter that can regulate both intracellular and extracellular levels of cGMP and may be involved in cGMP signaling pathways. Mediates orotate/glutamate bidirectional exchange and most likely display a physiological role in hepatic release of glutamate into the blood. Involved in renal secretion and possible reabsorption of creatinine. Able to uptake prostaglandin E2 (PGE2) and may contribute to PGE2 renal excretion. Also transports alpha-ketoglutarate and urate. Apart from the orotate/glutamate exchange, the counterions for the uptake of other SLC22A7/OAT2 substrates remain to be identified. The protein is Solute carrier family 22 member 7 (SLC22A7) of Sus scrofa (Pig).